We begin with the raw amino-acid sequence, 572 residues long: uncharacterized protein (572 aa).

The interval 13 to 45 (ALIAKPKGKTVSGDGADPKKRGRPKKNATEPAV) is disordered. Residues 177-204 (VLTKEMEEKLEALDRDMRTAEETKVSIA) adopt a coiled-coil conformation.

This is an uncharacterized protein from Dryophytes versicolor (chameleon treefrog).